We begin with the raw amino-acid sequence, 117 residues long: Ribosome-binding factor A (117 aa).

Belongs to the RbfA family. As to quaternary structure, monomer. Binds 30S ribosomal subunits, but not 50S ribosomal subunits or 70S ribosomes.

Its subcellular location is the cytoplasm. One of several proteins that assist in the late maturation steps of the functional core of the 30S ribosomal subunit. Associates with free 30S ribosomal subunits (but not with 30S subunits that are part of 70S ribosomes or polysomes). Required for efficient processing of 16S rRNA. May interact with the 5'-terminal helix region of 16S rRNA. This Petrotoga mobilis (strain DSM 10674 / SJ95) protein is Ribosome-binding factor A.